Here is a 199-residue protein sequence, read N- to C-terminus: dTTP/UTP pyrophosphatase (199 aa).

The active-site Proton acceptor is Asp78.

Belongs to the Maf family. YhdE subfamily. A divalent metal cation serves as cofactor.

It is found in the cytoplasm. The catalysed reaction is dTTP + H2O = dTMP + diphosphate + H(+). The enzyme catalyses UTP + H2O = UMP + diphosphate + H(+). In terms of biological role, nucleoside triphosphate pyrophosphatase that hydrolyzes dTTP and UTP. May have a dual role in cell division arrest and in preventing the incorporation of modified nucleotides into cellular nucleic acids. This Clostridium acetobutylicum (strain ATCC 824 / DSM 792 / JCM 1419 / IAM 19013 / LMG 5710 / NBRC 13948 / NRRL B-527 / VKM B-1787 / 2291 / W) protein is dTTP/UTP pyrophosphatase.